The following is a 116-amino-acid chain: UPF0127 protein PF1050 (116 aa).

Belongs to the UPF0127 family.

This is UPF0127 protein PF1050 from Pyrococcus furiosus (strain ATCC 43587 / DSM 3638 / JCM 8422 / Vc1).